Here is a 478-residue protein sequence, read N- to C-terminus: Vitronectin (478 aa).

Residues 1–19 (MAPLRPLLILALLAWVALA) form the signal peptide. One can recognise an SMB domain in the interval 20 to 63 (DQESCKGRCTEGFNVDKKCQCDELCSYYQSCCTDYTAECKPQVT). Intrachain disulfides connect cysteine 24-cysteine 28, cysteine 24-cysteine 40, cysteine 28-cysteine 58, cysteine 38-cysteine 40, cysteine 38-cysteine 51, cysteine 44-cysteine 50, and cysteine 51-cysteine 58. The short motif at 64–66 (RGD) is the Cell attachment site element. Position 69 is a phosphothreonine; by CK2; in vitro (threonine 69). Tyrosine 75 carries the sulfotyrosine modification. Threonine 76 bears the Phosphothreonine; by CK2; in vitro mark. Tyrosine 78 bears the Sulfotyrosine mark. N-linked (GlcNAc...) (complex) asparagine glycosylation occurs at asparagine 86. Residues 91–158 (EQVGGPSLTS…PPAEEELCSG (68 aa)) form a disordered region. The segment covering 97–112 (SLTSDLQAQSKGNPEQ) has biased composition (polar residues). Phosphoserine occurs at positions 130 and 137. Positions 133 to 143 (EGIDSRPETLH) are enriched in basic and acidic residues. Hemopexin repeat units follow at residues 158–202 (GKPF…VWGI), 203–250 (EGPI…FDGI), and 251–305 (PDNV…FEHF). Asparagine 169 carries an N-linked (GlcNAc...) asparagine glycan. N-linked (GlcNAc...) (complex) asparagine glycosylation is present at asparagine 242. Residue tyrosine 282 is modified to Sulfotyrosine. Cysteines 293 and 430 form a disulfide. A Phosphoserine modification is found at serine 312. The interval 362–395 (RPSLAKKQRFRHRNRKGYRSQRGHSRGRNQNSRR) is heparin-binding. The tract at residues 364–398 (SLAKKQRFRHRNRKGYRSQRGHSRGRNQNSRRPSR) is disordered. Basic residues predominate over residues 365–388 (LAKKQRFRHRNRKGYRSQRGHSRG). Serine 397 is modified (phosphoserine; by PKA). A sulfotyrosine mark is found at tyrosine 417 and tyrosine 420. A Hemopexin 4 repeat occupies 419–472 (DYRMDWLVPATCEPIQSVFFFSGDKYYRVNLRTRRVDTVDPPYPRSIAQYWLGC).

In terms of assembly, exists in two forms: a single chain 75 kDa form (V75) and a clipped form composed of two chains (65 kDa and 10 kDa) (V65+V10) which are held together by a disulfide bond. Interacts with SERPINE1/PAI1, insulin and C1QBP. (Microbial infection) Interacts (via hemopexin repeat 2) with P.falciparum (isolate CDC / Honduras) SERA5 P47 (via C-terminus); may form heterotetramers of two VTN and SERA5 P47 heterodimers; the interaction may protect merozoites from phagocytosis by host monocytes; VTN glycosylation appears to be dispensable for the interaction. In terms of processing, sulfated on tyrosine residues. Post-translationally, N- and O-glycosylated. Phosphorylation on Thr-69 and Thr-76 favors cell adhesion and spreading. In terms of processing, it has been suggested that the active SMB domain may be permitted considerable disulfide bond heterogeneity or variability, thus two alternate disulfide patterns based on 3D structures are described with 1 disulfide bond conserved in both. Post-translationally, phosphorylation sites are present in the extracellular medium. In terms of tissue distribution, expressed in the retina pigment epithelium (at protein level). Expressed in plasma (at protein level). Expressed in serum (at protein level).

Its subcellular location is the secreted. The protein localises to the extracellular space. It is found in the parasitophorous vacuole. Its function is as follows. Vitronectin is a cell adhesion and spreading factor found in serum and tissues. Vitronectin interact with glycosaminoglycans and proteoglycans. Is recognized by certain members of the integrin family and serves as a cell-to-substrate adhesion molecule. Inhibitor of the membrane-damaging effect of the terminal cytolytic complement pathway. In terms of biological role, somatomedin-B is a growth hormone-dependent serum factor with protease-inhibiting activity. This is Vitronectin (VTN) from Homo sapiens (Human).